Here is a 729-residue protein sequence, read N- to C-terminus: Catalase-peroxidase (729 aa).

Residues 1–20 (MHNGSNGSVEQRDSMPETSR) form a disordered region. Residues 10–20 (EQRDSMPETSR) show a composition bias toward basic and acidic residues. Positions 91 to 214 (WHAAGTYRTT…LGATVMGLIY (124 aa)) form a cross-link, tryptophyl-tyrosyl-methioninium (Trp-Tyr) (with M-240). H92 acts as the Proton acceptor in catalysis. The segment at residues 214–240 (YVNPEGPESTPDPEWSAQRIRKSFGRM) is a cross-link (tryptophyl-tyrosyl-methioninium (Tyr-Met) (with W-91)). H255 provides a ligand contact to heme b.

Belongs to the peroxidase family. Peroxidase/catalase subfamily. In terms of assembly, homodimer or homotetramer. It depends on heme b as a cofactor. Formation of the three residue Trp-Tyr-Met cross-link is important for the catalase, but not the peroxidase activity of the enzyme.

The enzyme catalyses H2O2 + AH2 = A + 2 H2O. It catalyses the reaction 2 H2O2 = O2 + 2 H2O. Functionally, bifunctional enzyme with both catalase and broad-spectrum peroxidase activity. The chain is Catalase-peroxidase from Salinibacter ruber (strain DSM 13855 / M31).